The chain runs to 187 residues: Ubiquinone biosynthesis protein COQ4 homolog, mitochondrial (187 aa).

4 residues coordinate Zn(2+): H77, D78, H81, and E93.

This sequence belongs to the COQ4 family. In terms of assembly, component of a multi-subunit COQ enzyme complex. Zn(2+) is required as a cofactor.

It is found in the mitochondrion inner membrane. It catalyses the reaction a 4-hydroxy-3-methoxy-5-(all-trans-polyprenyl)benzoate + H(+) = a 2-methoxy-6-(all-trans-polyprenyl)phenol + CO2. The protein operates within cofactor biosynthesis; ubiquinone biosynthesis. In terms of biological role, lyase that catalyzes the C1-decarboxylation of 4-hydroxy-3-methoxy-5-(all-trans-polyprenyl)benzoic acid into 2-methoxy-6-(all-trans-polyprenyl)phenol during ubiquinone biosynthesis. The sequence is that of Ubiquinone biosynthesis protein COQ4 homolog, mitochondrial from Leishmania major.